A 78-amino-acid polypeptide reads, in one-letter code: Large ribosomal subunit protein bL28 (78 aa).

The protein belongs to the bacterial ribosomal protein bL28 family.

The sequence is that of Large ribosomal subunit protein bL28 from Synechococcus sp. (strain CC9311).